Here is a 456-residue protein sequence, read N- to C-terminus: Serine--tRNA ligase (456 aa).

The segment at 49–69 (HERNEVSSTIGELKQAGEEEA) is disordered. 241 to 243 (TAE) lines the L-serine pocket. ATP is bound by residues 272-274 (RQE) and V288. E295 is an L-serine binding site. ATP is bound at residue 368–371 (EVSS). Residue S404 coordinates L-serine.

This sequence belongs to the class-II aminoacyl-tRNA synthetase family. Type-1 seryl-tRNA synthetase subfamily. Homodimer. The tRNA molecule binds across the dimer.

It localises to the cytoplasm. The enzyme catalyses tRNA(Ser) + L-serine + ATP = L-seryl-tRNA(Ser) + AMP + diphosphate + H(+). It carries out the reaction tRNA(Sec) + L-serine + ATP = L-seryl-tRNA(Sec) + AMP + diphosphate + H(+). The protein operates within aminoacyl-tRNA biosynthesis; selenocysteinyl-tRNA(Sec) biosynthesis; L-seryl-tRNA(Sec) from L-serine and tRNA(Sec): step 1/1. In terms of biological role, catalyzes the attachment of serine to tRNA(Ser). Is also able to aminoacylate tRNA(Sec) with serine, to form the misacylated tRNA L-seryl-tRNA(Sec), which will be further converted into selenocysteinyl-tRNA(Sec). The chain is Serine--tRNA ligase from Halorubrum lacusprofundi (strain ATCC 49239 / DSM 5036 / JCM 8891 / ACAM 34).